An 88-amino-acid polypeptide reads, in one-letter code: U-scoloptoxin(XY)-Er1b (88 aa).

A signal peptide spans 1 to 24 (MASQVVLSFALVVVLAVFVGQVDS). The segment at 66–88 (RPELSPGALDDSSEEKDNEASLA) is disordered. Positions 79-88 (EEKDNEASLA) are excised as a propeptide.

The protein belongs to the scoloptoxin-XY family. Post-translationally, contains 3 disulfide bonds. As to expression, expressed by the venom gland.

It is found in the secreted. This Ethmostigmus rubripes (Giant centipede) protein is U-scoloptoxin(XY)-Er1b.